The chain runs to 38 residues: Large ribosomal subunit protein bL36 (38 aa).

The protein belongs to the bacterial ribosomal protein bL36 family.

In Polynucleobacter necessarius subsp. necessarius (strain STIR1), this protein is Large ribosomal subunit protein bL36.